The chain runs to 189 residues: Recombination protein RecR (189 aa).

The C4-type zinc-finger motif lies at 48 to 63; the sequence is CQTCFHLSAEPLCDIC. One can recognise a Toprim domain in the interval 71 to 165; the sequence is QLLCVVADSR…QVSRIAYGLP (95 aa).

It belongs to the RecR family.

Its function is as follows. May play a role in DNA repair. It seems to be involved in an RecBC-independent recombinational process of DNA repair. It may act with RecF and RecO. In Prochlorococcus marinus (strain MIT 9303), this protein is Recombination protein RecR.